A 368-amino-acid polypeptide reads, in one-letter code: DNA replication and repair protein RecF (368 aa).

30 to 37 is a binding site for ATP; the sequence is GNNAQGKT.

The protein belongs to the RecF family.

The protein resides in the cytoplasm. The RecF protein is involved in DNA metabolism; it is required for DNA replication and normal SOS inducibility. RecF binds preferentially to single-stranded, linear DNA. It also seems to bind ATP. In Streptococcus pyogenes serotype M5 (strain Manfredo), this protein is DNA replication and repair protein RecF.